We begin with the raw amino-acid sequence, 335 residues long: Histidinol-phosphate aminotransferase (335 aa).

N6-(pyridoxal phosphate)lysine is present on Lys-202.

Belongs to the class-II pyridoxal-phosphate-dependent aminotransferase family. Histidinol-phosphate aminotransferase subfamily. In terms of assembly, homodimer. Pyridoxal 5'-phosphate serves as cofactor.

The catalysed reaction is L-histidinol phosphate + 2-oxoglutarate = 3-(imidazol-4-yl)-2-oxopropyl phosphate + L-glutamate. It participates in amino-acid biosynthesis; L-histidine biosynthesis; L-histidine from 5-phospho-alpha-D-ribose 1-diphosphate: step 7/9. This is Histidinol-phosphate aminotransferase from Thermotoga neapolitana (strain ATCC 49049 / DSM 4359 / NBRC 107923 / NS-E).